Here is a 195-residue protein sequence, read N- to C-terminus: Thioredoxin reductase-like selenoprotein T (195 aa).

A signal peptide spans 1 to 19; the sequence is MRLLLLLLVAASAMVRSEA. The cysteinyl-selenocysteine (Cys-Sec) cross-link spans 46-49; that stretch reads CVSU. A non-standard amino acid (selenocysteine) is located at residue selenocysteine 49. The helical transmembrane segment at 85–103 threads the bilayer; the sequence is IASFLSVFKLVLIGLIIVG.

It belongs to the SelWTH family. Selenoprotein T subfamily. In terms of processing, may contain a selenide-sulfide bond between Cys-46 and Sec-49. This bond is speculated to serve as redox-active pair. Ubiquitous. Highly expressed in the endocrine pancreas.

The protein localises to the endoplasmic reticulum membrane. The catalysed reaction is [thioredoxin]-dithiol + NADP(+) = [thioredoxin]-disulfide + NADPH + H(+). Selenoprotein with thioredoxin reductase-like oxidoreductase activity. Protects dopaminergic neurons against oxidative stress and cell death. Involved in ADCYAP1/PACAP-induced calcium mobilization and neuroendocrine secretion. Plays a role in fibroblast anchorage and redox regulation. In gastric smooth muscle, modulates the contraction processes through the regulation of calcium release and MYLK activation. In pancreatic islets, involved in the control of glucose homeostasis, contributes to prolonged ADCYAP1/PACAP-induced insulin secretion. This is Thioredoxin reductase-like selenoprotein T from Homo sapiens (Human).